We begin with the raw amino-acid sequence, 28 residues long: CKGKGAPCTRLMYDCCHGSCSSSKGRCG.

3 disulfides stabilise this stretch: cysteine 1/cysteine 16, cysteine 8/cysteine 20, and cysteine 15/cysteine 27. The residue at position 7 (proline 7) is a 4-hydroxyproline; partial. A Methionine sulfoxide modification is found at methionine 12. Cysteine 27 is subject to Cysteine amide.

This sequence belongs to the conotoxin O1 superfamily. As to expression, expressed by the venom duct.

Its subcellular location is the secreted. Functionally, omega-conotoxins act at presynaptic membranes, they bind and block voltage-gated calcium channels (Cav). This toxin blocks N-type calcium channels (Cav2.2/CACNA1B) with high potency. Unexpectedly, it does not show any blocking activity at amphibian neuromuscular junction. In vivo, when intracerebroventricularly injected into mice causes shaking activity, and, at higher doses, causes mild tremors. When injected intramuscularly into fish, it causes paralysis, and, at higher doses, causes death. This chain is Omega-conotoxin-like CnVIIH, found in Conus consors (Singed cone).